The following is a 393-amino-acid chain: Phosphoglycerate kinase (393 aa).

Residues 21–23 (DLN), R36, 59–62 (HLGR), R114, and R147 contribute to the substrate site. Residues K198, E314, and 340-343 (GGDT) each bind ATP.

It belongs to the phosphoglycerate kinase family. As to quaternary structure, monomer.

It localises to the cytoplasm. The catalysed reaction is (2R)-3-phosphoglycerate + ATP = (2R)-3-phospho-glyceroyl phosphate + ADP. It functions in the pathway carbohydrate degradation; glycolysis; pyruvate from D-glyceraldehyde 3-phosphate: step 2/5. The polypeptide is Phosphoglycerate kinase (Buchnera aphidicola subsp. Baizongia pistaciae (strain Bp)).